The chain runs to 232 residues: Adenosylcobinamide-GDP ribazoletransferase (232 aa).

The next 6 helical transmembrane spans lie at 32-52 (PIYF…GGSF), 54-74 (NFLL…LFHF), 102-122 (VGPF…TLYL), 126-146 (PITF…LMFF), 172-192 (FFLL…VVTV), and 212-232 (DVLG…LGVV).

Belongs to the CobS family. The cofactor is Mg(2+).

It is found in the cell inner membrane. It carries out the reaction alpha-ribazole + adenosylcob(III)inamide-GDP = adenosylcob(III)alamin + GMP + H(+). The catalysed reaction is alpha-ribazole 5'-phosphate + adenosylcob(III)inamide-GDP = adenosylcob(III)alamin 5'-phosphate + GMP + H(+). Its pathway is cofactor biosynthesis; adenosylcobalamin biosynthesis; adenosylcobalamin from cob(II)yrinate a,c-diamide: step 7/7. In terms of biological role, joins adenosylcobinamide-GDP and alpha-ribazole to generate adenosylcobalamin (Ado-cobalamin). Also synthesizes adenosylcobalamin 5'-phosphate from adenosylcobinamide-GDP and alpha-ribazole 5'-phosphate. This chain is Adenosylcobinamide-GDP ribazoletransferase, found in Thermosipho melanesiensis (strain DSM 12029 / CIP 104789 / BI429).